The sequence spans 189 residues: Interferon alpha-6 (189 aa).

Positions 1–20 (MALPFALLMALVVLSCKSSC) are cleaved as a signal peptide. Disulfide bonds link cysteine 24/cysteine 122 and cysteine 52/cysteine 162.

The protein belongs to the alpha/beta interferon family.

The protein localises to the secreted. Produced by macrophages, IFN-alpha have antiviral activities. Interferon stimulates the production of two enzymes: a protein kinase and an oligoadenylate synthetase. The chain is Interferon alpha-6 (IFNA6) from Homo sapiens (Human).